The sequence spans 589 residues: Acyl-CoA ligase SID4 (589 aa).

A PTS2-type peroxisomal targeting signal motif is present at residues 12–20 (RLQQTLNHI). Residues 228-236 (TSGSTGNPK), 367-372 (SSYGLT), Asp-458, and Arg-473 contribute to the ATP site. Thr-372 lines the substrate pocket. CoA-binding positions include 481 to 483 (GGE), Lys-547, and 555 to 557 (FGL). Position 572 (Lys-572) interacts with ATP.

Belongs to the ATP-dependent AMP-binding enzyme family.

The protein localises to the peroxisome. It functions in the pathway siderophore biosynthesis. Acyl-CoA ligase; part of the gene cluster that mediates the biosynthesis of hydroxamate-containing siderophores that play a critical role in virulence via intracellular iron acquisition during macrophage infection. In Ajellomyces capsulatus (Darling's disease fungus), this protein is Acyl-CoA ligase SID4.